Here is a 362-residue protein sequence, read N- to C-terminus: Phosphoserine aminotransferase (362 aa).

R43 is an L-glutamate binding site. Residues 77–78, W103, T153, D173, and Q196 contribute to the pyridoxal 5'-phosphate site; that span reads AR. The residue at position 197 (K197) is an N6-(pyridoxal phosphate)lysine.

It belongs to the class-V pyridoxal-phosphate-dependent aminotransferase family. SerC subfamily. As to quaternary structure, homodimer. The cofactor is pyridoxal 5'-phosphate.

The protein localises to the cytoplasm. It catalyses the reaction O-phospho-L-serine + 2-oxoglutarate = 3-phosphooxypyruvate + L-glutamate. It carries out the reaction 4-(phosphooxy)-L-threonine + 2-oxoglutarate = (R)-3-hydroxy-2-oxo-4-phosphooxybutanoate + L-glutamate. Its pathway is amino-acid biosynthesis; L-serine biosynthesis; L-serine from 3-phospho-D-glycerate: step 2/3. The protein operates within cofactor biosynthesis; pyridoxine 5'-phosphate biosynthesis; pyridoxine 5'-phosphate from D-erythrose 4-phosphate: step 3/5. Functionally, catalyzes the reversible conversion of 3-phosphohydroxypyruvate to phosphoserine and of 3-hydroxy-2-oxo-4-phosphonooxybutanoate to phosphohydroxythreonine. This chain is Phosphoserine aminotransferase, found in Legionella pneumophila (strain Paris).